Reading from the N-terminus, the 177-residue chain is Prorelaxin (177 aa).

Positions 1–22 (MSCKFVLQLLGFWLLLSQPCRA) are cleaved as a signal peptide. 3 disulfides stabilise this stretch: Cys36-Cys164, Cys48-Cys177, and Cys163-Cys168. Residues 64 to 149 (MTEEAVSSFI…LKSLYLDTLS (86 aa)) constitute a propeptide, connecting peptide. Residues 80–114 (FDTMPNLSEKPKTALPEGHPSLPEQQQYVPVSSDS) form a disordered region. Polar residues predominate over residues 102 to 114 (PEQQQYVPVSSDS).

The protein belongs to the insulin family. As to quaternary structure, heterodimer of a B chain and an A chain linked by two disulfide bonds.

Its subcellular location is the secreted. Functionally, relaxin is an ovarian hormone that acts with estrogen to produce dilatation of the birth canal in many mammals. It bears mature young, and allows separation of the pelvic bones. The sequence is that of Prorelaxin (RLN) from Mesocricetus auratus (Golden hamster).